The primary structure comprises 552 residues: Hydroxylamine reductase (552 aa).

Residues Cys-3, Cys-6, Cys-18, and Cys-25 each coordinate [2Fe-2S] cluster. Positions 250, 274, 318, 406, 434, 459, 493, and 495 each coordinate hybrid [4Fe-2O-2S] cluster. Cysteine persulfide is present on Cys-406.

It belongs to the HCP family. Requires [2Fe-2S] cluster as cofactor. It depends on hybrid [4Fe-2O-2S] cluster as a cofactor.

The protein localises to the cytoplasm. It catalyses the reaction A + NH4(+) + H2O = hydroxylamine + AH2 + H(+). Catalyzes the reduction of hydroxylamine to form NH(3) and H(2)O. The protein is Hydroxylamine reductase of Shewanella woodyi (strain ATCC 51908 / MS32).